The primary structure comprises 223 residues: Glutathione S-transferase Z2 (223 aa).

Residues 10-91 enclose the GST N-terminal domain; the sequence is AKLKLYSYWR…YLDDKYPEPP (82 aa). Glutathione-binding positions include 20-21, 20-25, Gln49, 49-50, 62-63, Val63, 75-76, Gln115, and 119-121; these read SS, SSCAHR, QS, TV, DS, and NMA. The 126-residue stretch at 96 to 221 folds into the GST C-terminal domain; it reads DYHKRAVNYQ…VPEKQPDTPS (126 aa).

This sequence belongs to the GST superfamily. Zeta family.

It is found in the cytoplasm. The protein resides in the cytosol. The enzyme catalyses RX + glutathione = an S-substituted glutathione + a halide anion + H(+). In terms of biological role, may be involved in the conjugation of reduced glutathione to a wide number of exogenous and endogenous hydrophobic electrophiles and have a detoxification role against certain herbicides. The chain is Glutathione S-transferase Z2 (GSTZ2) from Arabidopsis thaliana (Mouse-ear cress).